We begin with the raw amino-acid sequence, 297 residues long: Probable porphobilinogen deaminase (297 aa).

Cys-233 is modified (S-(dipyrrolylmethanemethyl)cysteine).

The protein belongs to the HMBS family. It depends on dipyrromethane as a cofactor.

The enzyme catalyses 4 porphobilinogen + H2O = hydroxymethylbilane + 4 NH4(+). The protein operates within porphyrin-containing compound metabolism; protoporphyrin-IX biosynthesis; coproporphyrinogen-III from 5-aminolevulinate: step 2/4. In terms of biological role, tetrapolymerization of the monopyrrole PBG into the hydroxymethylbilane pre-uroporphyrinogen in several discrete steps. This Thermoplasma volcanium (strain ATCC 51530 / DSM 4299 / JCM 9571 / NBRC 15438 / GSS1) protein is Probable porphobilinogen deaminase.